A 401-amino-acid polypeptide reads, in one-letter code: Exodeoxyribonuclease 7 large subunit (401 aa).

The protein belongs to the XseA family. As to quaternary structure, heterooligomer composed of large and small subunits.

The protein localises to the cytoplasm. The enzyme catalyses Exonucleolytic cleavage in either 5'- to 3'- or 3'- to 5'-direction to yield nucleoside 5'-phosphates.. Bidirectionally degrades single-stranded DNA into large acid-insoluble oligonucleotides, which are then degraded further into small acid-soluble oligonucleotides. This chain is Exodeoxyribonuclease 7 large subunit, found in Clostridium botulinum (strain Langeland / NCTC 10281 / Type F).